We begin with the raw amino-acid sequence, 135 residues long: Small ribosomal subunit protein uS8 (135 aa).

This sequence belongs to the universal ribosomal protein uS8 family. As to quaternary structure, part of the 30S ribosomal subunit. Contacts proteins S5 and S12.

Functionally, one of the primary rRNA binding proteins, it binds directly to 16S rRNA central domain where it helps coordinate assembly of the platform of the 30S subunit. The polypeptide is Small ribosomal subunit protein uS8 (Parafrankia sp. (strain EAN1pec)).